Here is a 219-residue protein sequence, read N- to C-terminus: Probable lipoprotein YiaD (219 aa).

An N-terminal signal peptide occupies residues Met1–Gly20. Cys21 carries N-palmitoyl cysteine lipidation. Cys21 carries the S-diacylglycerol cysteine lipid modification. 2 consecutive transmembrane segments (helical) span residues Ile37 to Ser55 and Gly62 to Gln84. Positions Gly103–Leu219 constitute an OmpA-like domain.

It localises to the cell inner membrane. The protein localises to the cell outer membrane. Its function is as follows. Suppresses temperature-sensitive mutations in BamB when overexpressed. In Escherichia coli (strain K12), this protein is Probable lipoprotein YiaD (yiaD).